Consider the following 174-residue polypeptide: Phosphopantetheine adenylyltransferase (174 aa).

Threonine 10 contributes to the substrate binding site. ATP contacts are provided by residues 10-11 and histidine 18; that span reads TF. Residues lysine 44, leucine 76, and arginine 90 each coordinate substrate. Residues 91–93, glutamate 101, and 126–132 contribute to the ATP site; these read GLR and HAYISSS.

Belongs to the bacterial CoaD family. As to quaternary structure, homohexamer. Mg(2+) is required as a cofactor.

It localises to the cytoplasm. It carries out the reaction (R)-4'-phosphopantetheine + ATP + H(+) = 3'-dephospho-CoA + diphosphate. It participates in cofactor biosynthesis; coenzyme A biosynthesis; CoA from (R)-pantothenate: step 4/5. Functionally, reversibly transfers an adenylyl group from ATP to 4'-phosphopantetheine, yielding dephospho-CoA (dPCoA) and pyrophosphate. In Alkalilimnicola ehrlichii (strain ATCC BAA-1101 / DSM 17681 / MLHE-1), this protein is Phosphopantetheine adenylyltransferase.